Consider the following 600-residue polypeptide: Elongation factor 4 (600 aa).

One can recognise a tr-type G domain in the interval 4–186 (KNVRNFCIIA…AIVNRIPPPK (183 aa)). GTP contacts are provided by residues 16 to 21 (DHGKST) and 133 to 136 (NKID).

This sequence belongs to the TRAFAC class translation factor GTPase superfamily. Classic translation factor GTPase family. LepA subfamily.

Its subcellular location is the cell inner membrane. The enzyme catalyses GTP + H2O = GDP + phosphate + H(+). In terms of biological role, required for accurate and efficient protein synthesis under certain stress conditions. May act as a fidelity factor of the translation reaction, by catalyzing a one-codon backward translocation of tRNAs on improperly translocated ribosomes. Back-translocation proceeds from a post-translocation (POST) complex to a pre-translocation (PRE) complex, thus giving elongation factor G a second chance to translocate the tRNAs correctly. Binds to ribosomes in a GTP-dependent manner. This Aquifex aeolicus (strain VF5) protein is Elongation factor 4.